A 744-amino-acid polypeptide reads, in one-letter code: 6-phosphofructo-2-kinase/fructose-2,6-bisphosphatase (744 aa).

Disordered regions lie at residues 1–23 and 213–245; these read MGSG…GGQL and RSLS…DGSP. Gly-2 carries the N-myristoyl glycine lipid modification. The 106-residue stretch at 17–122 folds into the CBM20 domain; the sequence is NGGGGQLYVS…GDARLALFRL (106 aa). A compositionally biased stretch (polar residues) spans 213 to 232; that stretch reads RSLSASGSFRNDSTPKAAQR. Ser-220 is subject to Phosphoserine; by CPK3. Residues Ser-276 and Ser-295 each carry the phosphoserine modification. The segment at 301–549 is 6-phosphofructo-2-kinase; the sequence is SLSASSFLID…VFFLVNTHLT (249 aa). Residue Ser-303 is modified to Phosphoserine; by CPK3. 349 to 357 serves as a coordination point for ATP; it reads GLPARGKTF. Beta-D-fructose 6-phosphate-binding residues include Arg-382 and Arg-406. Asp-431 is an active-site residue. 2 residues coordinate beta-D-fructose 6-phosphate: Thr-433 and Arg-439. The active site involves Cys-460. 469–474 serves as a coordination point for ATP; the sequence is NIRLKI. Beta-D-fructose 6-phosphate contacts are provided by Arg-496 and Tyr-500. The segment at 550–744 is fructose-2,6-bisphosphatase; it reads PRPILLTRHG…VQEKRYKLMD (195 aa). Beta-D-fructose 2,6-bisphosphate is bound at residue Arg-557. His-558 functions as the Tele-phosphohistidine intermediate in the catalytic mechanism. The beta-D-fructose 2,6-bisphosphate site is built by Asn-564 and Gly-570. Catalysis depends on Glu-630, which acts as the Proton donor/acceptor. Beta-D-fructose 2,6-bisphosphate-binding residues include Tyr-641, Arg-655, Lys-659, Tyr-670, Gln-697, and Arg-701. ATP is bound at residue 652 to 655; the sequence is YESR. Position 697 to 701 (697 to 701) interacts with ATP; it reads QAVLR.

It in the C-terminal section; belongs to the phosphoglycerate mutase family. Interacts with 14-3-3 proteins; these interactions may regulate both nitrate assimilation and sucrose/starch partitioning in leaves during the diurnal cycle. In terms of processing, phosphorylation at Ser-220 and Ser-303 by CPK3 promotes 14-3-3 proteins binding.

It localises to the membrane. The protein resides in the cytoplasm. It catalyses the reaction beta-D-fructose 2,6-bisphosphate + H2O = beta-D-fructose 6-phosphate + phosphate. It carries out the reaction beta-D-fructose 6-phosphate + ATP = beta-D-fructose 2,6-bisphosphate + ADP + H(+). With respect to regulation, 6-phosphofructo-2-kinase activity is activated by pyruvate. 6-phosphofructo-2-kinase activity is inhibited by PPi, phosphoenolpyruvate and 2-phosphoglycerate. Fructose-2,6-bisphosphatase activity is inhibited by pyruvate, fructose 1,6-bisphosphate and 6-phosphogluconate. Its function is as follows. Synthesis and degradation of fructose 2,6-bisphosphate. Regulates carbon partitioning between sucrose versus starch during the diurnal cycle. The sequence is that of 6-phosphofructo-2-kinase/fructose-2,6-bisphosphatase (FKFBP) from Arabidopsis thaliana (Mouse-ear cress).